Consider the following 862-residue polypeptide: Leucine--tRNA ligase (862 aa).

The short motif at 42–52 (PYPSGRLHMGH) is the 'HIGH' region element. Positions 622–626 (KMSKS) match the 'KMSKS' region motif. Residue Lys-625 participates in ATP binding.

The protein belongs to the class-I aminoacyl-tRNA synthetase family.

It localises to the cytoplasm. It carries out the reaction tRNA(Leu) + L-leucine + ATP = L-leucyl-tRNA(Leu) + AMP + diphosphate. In Vibrio campbellii (strain ATCC BAA-1116), this protein is Leucine--tRNA ligase.